The sequence spans 694 residues: E3 ubiquitin-protein ligase SPL11 (694 aa).

Acidic residues predominate over residues 1 to 12 (MAGDRAEEEEGE). Disordered regions lie at residues 1 to 21 (MAGD…ARAA) and 343 to 363 (NGME…ACSS). Positions 272 to 346 (TIPDEFRCPI…SQWCETNGME (75 aa)) constitute a U-box domain. Polar residues predominate over residues 350 to 363 (RSTQPNKPTPACSS). 6 ARM repeats span residues 398–438 (NANN…NLSI), 439–479 (HEDN…SLSV), 480–520 (IDEY…NLCI), 521–561 (YQGN…ILSS), 562–602 (HPEG…HLCS), and 603–650 (GEHH…FLVQ). The span at 650 to 667 (QQQEEQESQSQASAQVPP) shows a compositional bias: low complexity. A disordered region spans residues 650 to 694 (QQQEEQESQSQASAQVPPQATPEQVPENDIPEQLDSPASQYPMVV).

In terms of assembly, interacts with SPIN1 (via N-terminus). As to expression, highly expressed in leaf, at intermediate levels in shoot and weakly in root.

Its subcellular location is the nucleus. It is found in the cytoplasm. It carries out the reaction S-ubiquitinyl-[E2 ubiquitin-conjugating enzyme]-L-cysteine + [acceptor protein]-L-lysine = [E2 ubiquitin-conjugating enzyme]-L-cysteine + N(6)-ubiquitinyl-[acceptor protein]-L-lysine.. It participates in protein modification; protein ubiquitination. E3 ubiquitin-protein ligase that negatively regulates programmed cell death and disease resistance. Participates in flowering time control by mediating ubiquitination and subsequent proteasomal degradation of SPIN1. The protein is E3 ubiquitin-protein ligase SPL11 (SPL11) of Oryza sativa subsp. japonica (Rice).